We begin with the raw amino-acid sequence, 1169 residues long: DNA-directed RNA polymerase subunit beta (1169 aa).

This sequence belongs to the RNA polymerase beta chain family. In terms of assembly, the RNAP catalytic core consists of 2 alpha, 1 beta, 1 beta' and 1 omega subunit. When a sigma factor is associated with the core the holoenzyme is formed, which can initiate transcription. Interacts with RbpA, which partially restores Rif-inhibited transcription.

It catalyses the reaction RNA(n) + a ribonucleoside 5'-triphosphate = RNA(n+1) + diphosphate. In terms of biological role, DNA-dependent RNA polymerase catalyzes the transcription of DNA into RNA using the four ribonucleoside triphosphates as substrates. This subunit often mutates to generate rifampicin (Rif) resistance. Interaction with RbpA partially restores Rif-inhibited transcription; once the subunit is Rif-resistant however RbpA no longer stimulates transcription. The sequence is that of DNA-directed RNA polymerase subunit beta from Mycolicibacterium smegmatis (strain ATCC 700084 / mc(2)155) (Mycobacterium smegmatis).